Consider the following 38-residue polypeptide: Defensin-like peptide 3 (38 aa).

2 disulfide bridges follow: Cys-6–Cys-36 and Cys-13–Cys-29.

As to expression, produced by the crural gland and detected in venom from the spur located on each male hind leg.

The protein localises to the secreted. In terms of biological role, does not show antimicrobial, myotoxic, hemolytic and cell-promoting activities. The polypeptide is Defensin-like peptide 3 (Ornithorhynchus anatinus (Duckbill platypus)).